Reading from the N-terminus, the 116-residue chain is Protein Rev (116 aa).

Residues Ser-5 and Ser-8 each carry the phosphoserine; by host CK2 modification. Positions 18 to 26 (LIKFLYQSN) are homomultimerization. The segment at 23–49 (YQSNPPPNPEGTRQARRNRRRRWRERQ) is disordered. The Nuclear localization signal and RNA-binding (RRE) signature appears at 34–50 (TRQARRNRRRRWRERQR). Residues 36-47 (QARRNRRRRWRE) show a composition bias toward basic residues. The Nuclear export signal and binding to XPO1 signature appears at 73–84 (LQLPPLERLTLD). Phosphoserine; by host is present on residues Ser-92 and Ser-99.

Belongs to the HIV-1 REV protein family. As to quaternary structure, homomultimer; when bound to the RRE. Multimeric assembly is essential for activity and may involve XPO1. Binds to human KPNB1, XPO1, TNPO1, RANBP5 and IPO7. Interacts with the viral Integrase. Interacts with human KHDRBS1. Interacts with human NAP1; this interaction decreases Rev multimerization and stimulates its activity. Interacts with human DEAD-box helicases DDX3 and DDX24; these interactions may serve for viral RNA export to the cytoplasm and packaging, respectively. Interacts with human PSIP1; this interaction may inhibit HIV-1 DNA integration by promoting dissociation of the Integrase-LEDGF/p75 complex. In terms of processing, asymmetrically arginine dimethylated at one site by host PRMT6. Methylation impairs the RNA-binding activity and export of viral RNA from the nucleus to the cytoplasm. Post-translationally, phosphorylated by protein kinase CK2. Presence of, and maybe binding to the N-terminus of the regulatory beta subunit of CK2 is necessary for CK2-mediated Rev's phosphorylation.

The protein resides in the host nucleus. Its subcellular location is the host nucleolus. It is found in the host cytoplasm. Its function is as follows. Escorts unspliced or incompletely spliced viral pre-mRNAs (late transcripts) out of the nucleus of infected cells. These pre-mRNAs carry a recognition sequence called Rev responsive element (RRE) located in the env gene, that is not present in fully spliced viral mRNAs (early transcripts). This function is essential since most viral proteins are translated from unspliced or partially spliced pre-mRNAs which cannot exit the nucleus by the pathway used by fully processed cellular mRNAs. Rev itself is translated from a fully spliced mRNA that readily exits the nucleus. Rev's nuclear localization signal (NLS) binds directly to KPNB1/Importin beta-1 without previous binding to KPNA1/Importin alpha-1. KPNB1 binds to the GDP bound form of RAN (Ran-GDP) and targets Rev to the nucleus. In the nucleus, the conversion from Ran-GDP to Ran-GTP dissociates Rev from KPNB1 and allows Rev's binding to the RRE in viral pre-mRNAs. Rev multimerization on the RRE via cooperative assembly exposes its nuclear export signal (NES) to the surface. Rev can then form a complex with XPO1/CRM1 and Ran-GTP, leading to nuclear export of the complex. Conversion from Ran-GTP to Ran-GDP mediates dissociation of the Rev/RRE/XPO1/RAN complex, so that Rev can return to the nucleus for a subsequent round of export. Beside KPNB1, also seems to interact with TNPO1/Transportin-1, RANBP5/IPO5 and IPO7/RANBP7 for nuclear import. The nucleoporin-like HRB/RIP is an essential cofactor that probably indirectly interacts with Rev to release HIV RNAs from the perinuclear region to the cytoplasm. The polypeptide is Protein Rev (Human immunodeficiency virus type 1 group M subtype B (isolate PCV12) (HIV-1)).